Here is a 182-residue protein sequence, read N- to C-terminus: Transcription termination/antitermination protein NusG (182 aa).

Belongs to the NusG family.

Functionally, participates in transcription elongation, termination and antitermination. The protein is Transcription termination/antitermination protein NusG of Chlamydia pneumoniae (Chlamydophila pneumoniae).